A 377-amino-acid chain; its full sequence is N5-carboxyaminoimidazole ribonucleotide synthase (377 aa).

ATP is bound by residues arginine 93, lysine 133, 138 to 144, 175 to 178, glutamate 183, histidine 206, and 257 to 258; these read GYDGKGQ, EEFV, and NE. In terms of domain architecture, ATP-grasp spans 97 to 287; the sequence is KALLDRAQVA…QFENHLRAVC (191 aa).

Belongs to the PurK/PurT family. Homodimer.

It carries out the reaction 5-amino-1-(5-phospho-beta-D-ribosyl)imidazole + hydrogencarbonate + ATP = 5-carboxyamino-1-(5-phospho-D-ribosyl)imidazole + ADP + phosphate + 2 H(+). Its pathway is purine metabolism; IMP biosynthesis via de novo pathway; 5-amino-1-(5-phospho-D-ribosyl)imidazole-4-carboxylate from 5-amino-1-(5-phospho-D-ribosyl)imidazole (N5-CAIR route): step 1/2. Functionally, catalyzes the ATP-dependent conversion of 5-aminoimidazole ribonucleotide (AIR) and HCO(3)(-) to N5-carboxyaminoimidazole ribonucleotide (N5-CAIR). The sequence is that of N5-carboxyaminoimidazole ribonucleotide synthase from Vibrio cholerae serotype O1 (strain ATCC 39315 / El Tor Inaba N16961).